The chain runs to 497 residues: Probable cytosol aminopeptidase (497 aa).

Mn(2+)-binding residues include Lys267 and Asp272. The active site involves Lys279. Positions 290, 349, and 351 each coordinate Mn(2+). Arg353 is a catalytic residue.

This sequence belongs to the peptidase M17 family. Requires Mn(2+) as cofactor.

The protein resides in the cytoplasm. It catalyses the reaction Release of an N-terminal amino acid, Xaa-|-Yaa-, in which Xaa is preferably Leu, but may be other amino acids including Pro although not Arg or Lys, and Yaa may be Pro. Amino acid amides and methyl esters are also readily hydrolyzed, but rates on arylamides are exceedingly low.. It carries out the reaction Release of an N-terminal amino acid, preferentially leucine, but not glutamic or aspartic acids.. In terms of biological role, presumably involved in the processing and regular turnover of intracellular proteins. Catalyzes the removal of unsubstituted N-terminal amino acids from various peptides. This Pseudomonas entomophila (strain L48) protein is Probable cytosol aminopeptidase.